The sequence spans 355 residues: (R,S)-reticuline 7-O-methyltransferase (355 aa).

S-adenosyl-L-methionine is bound by residues 197-200 (VGGG), Asp221, 221-222 (DL), 241-242 (DM), and Lys255. His259 (proton acceptor) is an active-site residue.

Belongs to the class I-like SAM-binding methyltransferase superfamily. Cation-independent O-methyltransferase family. As to quaternary structure, homodimer. As to expression, expressed in capsules, buds and stems, and at lower levels in leaves. Localized to parenchyma cells within the vascular bundle, but only to those cells distal to laticifers. In roots, found in the pericycle within the stele.

It catalyses the reaction (S)-reticuline + S-adenosyl-L-methionine = (S)-laudanine + S-adenosyl-L-homocysteine + H(+). The enzyme catalyses (R)-reticuline + S-adenosyl-L-methionine = (R)-laudanine + S-adenosyl-L-homocysteine + H(+). Catalyzes the transfer of a methyl group to reticuline to form laudanine. Methylates the simple catechols guaiacol and isovanillic acid as well as the tetrahydrobenzylisoquinolines (R)-reticuline, (S)-reticuline, (R,S)-orientaline, (R)-protosinomenine and (R,S)-isoorientaline. Involved in the production of laudanine. The sequence is that of (R,S)-reticuline 7-O-methyltransferase from Papaver somniferum (Opium poppy).